Reading from the N-terminus, the 211-residue chain is Nucleoside triphosphate pyrophosphatase (211 aa).

The active-site Proton acceptor is Asp-78.

Belongs to the Maf family. A divalent metal cation serves as cofactor.

The protein resides in the cytoplasm. The catalysed reaction is a ribonucleoside 5'-triphosphate + H2O = a ribonucleoside 5'-phosphate + diphosphate + H(+). It catalyses the reaction a 2'-deoxyribonucleoside 5'-triphosphate + H2O = a 2'-deoxyribonucleoside 5'-phosphate + diphosphate + H(+). In terms of biological role, nucleoside triphosphate pyrophosphatase. May have a dual role in cell division arrest and in preventing the incorporation of modified nucleotides into cellular nucleic acids. The protein is Nucleoside triphosphate pyrophosphatase of Mycolicibacterium smegmatis (strain ATCC 700084 / mc(2)155) (Mycobacterium smegmatis).